The sequence spans 839 residues: Phenylalanine--tRNA ligase beta subunit (839 aa).

Residues 42 to 166 enclose the tRNA-binding domain; that stretch reads GELTGPIVIG…PPSVEGHQLV (125 aa). In terms of domain architecture, B5 spans 421–496; it reads PEMPRQTINA…RKIGFDRIKA (76 aa). Residues Asp-474, Asp-480, Glu-483, and Glu-484 each coordinate Mg(2+). One can recognise an FDX-ACB domain in the interval 745–838; the sequence is SSFPVAKEDV…AEETCGAQLR (94 aa).

The protein belongs to the phenylalanyl-tRNA synthetase beta subunit family. Type 1 subfamily. Tetramer of two alpha and two beta subunits. Mg(2+) serves as cofactor.

It is found in the cytoplasm. It catalyses the reaction tRNA(Phe) + L-phenylalanine + ATP = L-phenylalanyl-tRNA(Phe) + AMP + diphosphate + H(+). This Cutibacterium acnes (strain DSM 16379 / KPA171202) (Propionibacterium acnes) protein is Phenylalanine--tRNA ligase beta subunit.